A 323-amino-acid polypeptide reads, in one-letter code: Aldo-keto reductase family 1 member C2 (323 aa).

NADP(+) is bound by residues G20–Y24 and D50. Residue Y24 coordinates substrate. Y55 (proton donor) is an active-site residue. H117 is a substrate binding site. NADP(+)-binding positions include S166–N167, Q190, and Y216–H222. H222 and W227 together coordinate substrate. Position 270-280 (K270–N280) interacts with NADP(+).

This sequence belongs to the aldo/keto reductase family. As to expression, expressed in fetal testes. Expressed in fetal and adult adrenal glands.

The protein localises to the cytoplasm. The protein resides in the cytosol. It catalyses the reaction a 3alpha-hydroxysteroid + NADP(+) = a 3-oxosteroid + NADPH + H(+). It carries out the reaction a 3alpha-hydroxysteroid + NAD(+) = a 3-oxosteroid + NADH + H(+). The catalysed reaction is 5alpha-androstane-3alpha,17beta-diol + NADP(+) = 17beta-hydroxy-5alpha-androstan-3-one + NADPH + H(+). The enzyme catalyses 5alpha-androstane-3alpha,17beta-diol + NAD(+) = 17beta-hydroxy-5alpha-androstan-3-one + NADH + H(+). It catalyses the reaction 5alpha-androstane-3alpha,17beta-diol + NAD(+) = androsterone + NADH + H(+). It carries out the reaction 17beta-estradiol + NADP(+) = estrone + NADPH + H(+). The catalysed reaction is 17beta-estradiol + NAD(+) = estrone + NADH + H(+). The enzyme catalyses (20S)-hydroxypregn-4-en-3-one + NADP(+) = progesterone + NADPH + H(+). It catalyses the reaction (20S)-hydroxypregn-4-en-3-one + NAD(+) = progesterone + NADH + H(+). It carries out the reaction androsterone + NADP(+) = 5alpha-androstan-3,17-dione + NADPH + H(+). The catalysed reaction is (3beta,5alpha,17beta)-3-hydroxy-androstan-17-yl sulfate + NADP(+) = 5alpha-dihydrotestosterone sulfate + NADPH + H(+). The enzyme catalyses (1R,2R)-1,2-dihydrobenzene-1,2-diol + NADP(+) = catechol + NADPH + H(+). It catalyses the reaction (S)-indan-1-ol + NAD(+) = indan-1-one + NADH + H(+). It carries out the reaction (S)-indan-1-ol + NADP(+) = indan-1-one + NADPH + H(+). It functions in the pathway steroid metabolism. Its activity is regulated as follows. Inhibited by hexestrol with an IC(50) of 2.8 uM, 1,10-phenanthroline with an IC(50) of 2100 uM, 1,7-phenanthroline with an IC(50) of 1500 uM, flufenamic acid with an IC(50) of 0.9 uM, indomethacin with an IC(50) of 75 uM, ibuprofen with an IC(50) of 6.9 uM, lithocholic acid with an IC(50) of 0.07 uM, ursodeoxycholic acid with an IC(50) of 0.08 uM and chenodeoxycholic acid with an IC(50) of 0.13 uM. The oxidation reaction is inhibited by low micromolar concentrations of NADPH. Functionally, cytosolic aldo-keto reductase that catalyzes the NADH and NADPH-dependent reduction of ketosteroids to hydroxysteroids. Most probably acts as a reductase in vivo since the oxidase activity measured in vitro is inhibited by physiological concentrations of NADPH. Displays a broad positional specificity acting on positions 3, 17 and 20 of steroids and regulates the metabolism of hormones like estrogens and androgens. Works in concert with the 5-alpha/5-beta-steroid reductases to convert steroid hormones into the 3-alpha/5-alpha and 3-alpha/5-beta-tetrahydrosteroids. Catalyzes the inactivation of the most potent androgen 5-alpha-dihydrotestosterone (5-alpha-DHT) to 5-alpha-androstane-3-alpha,17-beta-diol (3-alpha-diol). Also specifically able to produce 17beta-hydroxy-5alpha-androstan-3-one/5alphaDHT. May also reduce conjugated steroids such as 5alpha-dihydrotestosterone sulfate. Displays affinity for bile acids. In Homo sapiens (Human), this protein is Aldo-keto reductase family 1 member C2 (AKR1C2).